The primary structure comprises 840 residues: MVLNFLTRVFGSSNERAVKRLQPLVDKINALEPRFQKLTDNELAETTASFKLRLANGETLDDLLCEAFALVREASWRTLKMRHFDAQLIGGIALHQGIIAEMKTGEGKTLAATLPAYLNALSGKGVHIVTVNDYLARRDAEWMSTIYNFLNLSVGIIVHDLNDEERKKAYASDITYGTNNEFGFDYLRDNMKFDRESLAQKELNFAIVDEVDSILIDEARTPLIISGPAEKSTTLYAQTDTIISAFKKDIHYNVDEKAKSSTLTEEGVALGEQLLGVENLYDPSNIEILHHLNQAIKAHTLFKRDVDYIVKNDEVVIVDEFTGRLMTGRRYSEGLHQALEAKEGVKIANENQTLASVTFQNFFRMYKKLSGMTGTAETEAAEFKKIYDLDVLVIPTHKPMVRKDFPDLIYKTQKEKYQAAIQEIISLHKKGQPVLVGTIAIDVSEDISDKLKKRGIPHTVLNAKHHKAEAEIVANAGQRGAVTISTNMAGRGTDIVLGEGVKELGGLHILGTSRHESRRIDNQLRGRSGRQGDPGSSRFYLSLEDDLLRIFGGDRITAIMNKLGIDEGEPIEHGLISRAIENAQSKVEGHNFEIRKQLIEYDDVMNQQREVIYRQRRQILTDSDLSTLFKDMIQDQAWQIHAMYKNDKQHPMEWDLEGLKDTVKKQFNLEIDLSPAVCEDIDADALGELIETTAIDAYKAKESLLGPIDTQRLERYIMLQTVDSLWKDHLLNMDHLKEGIGLRGYAQQNPLILYKKEGYEMFEGLVERIKEETLGIFFRIQIAESEPLEPIQKPRQENLVFSHSDDSNVKKPVKRAQEKVGRNDLCPCGSGKKYKKCCGA.

ATP-binding positions include glutamine 87, 105-109 (GEGKT), and aspartate 494. Residues 518–537 (RRIDNQLRGRSGRQGDPGSS) are disordered. Residues cysteine 826, cysteine 828, cysteine 837, and cysteine 838 each contribute to the Zn(2+) site.

This sequence belongs to the SecA family. In terms of assembly, monomer and homodimer. Part of the essential Sec protein translocation apparatus which comprises SecA, SecYEG and auxiliary proteins SecDF-YajC and YidC. It depends on Zn(2+) as a cofactor.

The protein localises to the cell inner membrane. Its subcellular location is the cytoplasm. The enzyme catalyses ATP + H2O + cellular proteinSide 1 = ADP + phosphate + cellular proteinSide 2.. Its function is as follows. Part of the Sec protein translocase complex. Interacts with the SecYEG preprotein conducting channel. Has a central role in coupling the hydrolysis of ATP to the transfer of proteins into and across the cell membrane, serving as an ATP-driven molecular motor driving the stepwise translocation of polypeptide chains across the membrane. The chain is Protein translocase subunit SecA from Desulforapulum autotrophicum (strain ATCC 43914 / DSM 3382 / VKM B-1955 / HRM2) (Desulfobacterium autotrophicum).